The following is a 418-amino-acid chain: Probable serine hydroxymethyltransferase (418 aa).

Residues Leu-118 and 122-124 contribute to the (6S)-5,6,7,8-tetrahydrofolate site; that span reads GHL. At Lys-226 the chain carries N6-(pyridoxal phosphate)lysine. A (6S)-5,6,7,8-tetrahydrofolate-binding site is contributed by 351–353; that stretch reads SPF.

It belongs to the SHMT family. In terms of assembly, homodimer. Pyridoxal 5'-phosphate serves as cofactor.

The protein localises to the cytoplasm. The enzyme catalyses (6R)-5,10-methylene-5,6,7,8-tetrahydrofolate + glycine + H2O = (6S)-5,6,7,8-tetrahydrofolate + L-serine. The protein operates within one-carbon metabolism; tetrahydrofolate interconversion. Functionally, catalyzes the reversible interconversion of serine and glycine with tetrahydrofolate (THF) serving as the one-carbon carrier. This reaction serves as the major source of one-carbon groups required for the biosynthesis of purines, thymidylate, methionine, and other important biomolecules. The chain is Probable serine hydroxymethyltransferase from Mesomycoplasma hyopneumoniae (strain J / ATCC 25934 / NCTC 10110) (Mycoplasma hyopneumoniae).